The following is a 382-amino-acid chain: Anthranilate O-methyltransferase 1 (382 aa).

Y20 lines the S-adenosyl-L-homocysteine pocket. An anthranilate-binding site is contributed by Q27. S-adenosyl-L-homocysteine is bound by residues C61, N66, D102, L103, S146, and Y147. Residue W168 coordinates anthranilate. The Mg(2+) site is built by E268 and F270.

Belongs to the methyltransferase superfamily. Type-7 methyltransferase family. SABATH subfamily.

The catalysed reaction is anthranilate + S-adenosyl-L-methionine = O-methyl anthranilate + S-adenosyl-L-homocysteine. Its function is as follows. Methyltransferase involved in the biosynthesis of methyl anthranilate in response to stresses. Utilizes anthranilic acid as substrate, but not salicylic acid. Produces exclusively the O-methyl ester. The sequence is that of Anthranilate O-methyltransferase 1 (AAMT1) from Zea mays (Maize).